A 32-amino-acid polypeptide reads, in one-letter code: Conotoxin Cltx-4 (32 aa).

4-hydroxyproline is present on residues Pro-2, Pro-24, Pro-28, and Pro-30. Serine amide is present on Ser-32.

Post-translationally, contains 4 disulfide bonds. As to expression, expressed by the venom duct.

Its subcellular location is the secreted. The sequence is that of Conotoxin Cltx-4 from Californiconus californicus (California cone).